The following is a 315-amino-acid chain: Sulfate adenylyltransferase subunit 2 1 (315 aa).

The tract at residues 287–315 is disordered; sequence DSSSSERQGRAIDHDQSGSMERKKREGYF. Positions 293-315 are enriched in basic and acidic residues; the sequence is RQGRAIDHDQSGSMERKKREGYF.

It belongs to the PAPS reductase family. CysD subfamily. Heterodimer composed of CysD, the smaller subunit, and CysN.

It catalyses the reaction sulfate + ATP + H(+) = adenosine 5'-phosphosulfate + diphosphate. It functions in the pathway sulfur metabolism; hydrogen sulfide biosynthesis; sulfite from sulfate: step 1/3. In terms of biological role, with CysN forms the ATP sulfurylase (ATPS) that catalyzes the adenylation of sulfate producing adenosine 5'-phosphosulfate (APS) and diphosphate, the first enzymatic step in sulfur assimilation pathway. APS synthesis involves the formation of a high-energy phosphoric-sulfuric acid anhydride bond driven by GTP hydrolysis by CysN coupled to ATP hydrolysis by CysD. The polypeptide is Sulfate adenylyltransferase subunit 2 1 (Alkalilimnicola ehrlichii (strain ATCC BAA-1101 / DSM 17681 / MLHE-1)).